Here is a 208-residue protein sequence, read N- to C-terminus: NAD(P)H-quinone oxidoreductase subunit M, chloroplastic (208 aa).

A chloroplast-targeting transit peptide spans 1–21 (MAATSSYTACTKFSMLGWIGG). The segment covering 37-49 (QQAEVEESQQVNA) has biased composition (low complexity). The segment at 37-70 (QQAEVEESQQVNAQEEEQEKMKQQGKQKLPRPVE) is disordered.

The protein belongs to the NDH complex subunit M family. Part of the chloroplast NDH complex, composed of a mixture of chloroplast and nucleus encoded subunits. Component of the NDH subcomplex A, at least composed of ndhH, ndhI, ndhJ, ndhK, ndhL, ndhM, ndhN and ndhO.

It is found in the plastid. It localises to the chloroplast thylakoid membrane. The catalysed reaction is a plastoquinone + NADH + (n+1) H(+)(in) = a plastoquinol + NAD(+) + n H(+)(out). It catalyses the reaction a plastoquinone + NADPH + (n+1) H(+)(in) = a plastoquinol + NADP(+) + n H(+)(out). In terms of biological role, NDH shuttles electrons from NAD(P)H:plastoquinone, via FMN and iron-sulfur (Fe-S) centers, to quinones in the photosynthetic chain and possibly in a chloroplast respiratory chain. The immediate electron acceptor for the enzyme in this species is believed to be plastoquinone. Couples the redox reaction to proton translocation, and thus conserves the redox energy in a proton gradient. This chain is NAD(P)H-quinone oxidoreductase subunit M, chloroplastic, found in Vitis vinifera (Grape).